A 252-amino-acid polypeptide reads, in one-letter code: MLKKRIIPCLDVKDGRVVKGINFVNLTDVGDPVDASKAYYEAGCDELVFLDITATHEERDTTIEMVRRVAEQVFIPFTVGGGIRTVEDMKRMLQAGADKVAVNSSALANPQLLADCAEKFGSQCVVLAVDAKKEADGSWHVYLAGGRKDSGRELLDWVQEAVGLGAGEILLTSMDKDGTKSGFDLPMLEAVSQVVSVPIIASGGAGSSQHILEVFEKTAATGALAASIFHYGQVSISETKKAMQAAGLEVRI.

Active-site residues include Asp11 and Asp130.

This sequence belongs to the HisA/HisF family. In terms of assembly, heterodimer of HisH and HisF.

The protein resides in the cytoplasm. It carries out the reaction 5-[(5-phospho-1-deoxy-D-ribulos-1-ylimino)methylamino]-1-(5-phospho-beta-D-ribosyl)imidazole-4-carboxamide + L-glutamine = D-erythro-1-(imidazol-4-yl)glycerol 3-phosphate + 5-amino-1-(5-phospho-beta-D-ribosyl)imidazole-4-carboxamide + L-glutamate + H(+). The protein operates within amino-acid biosynthesis; L-histidine biosynthesis; L-histidine from 5-phospho-alpha-D-ribose 1-diphosphate: step 5/9. In terms of biological role, IGPS catalyzes the conversion of PRFAR and glutamine to IGP, AICAR and glutamate. The HisF subunit catalyzes the cyclization activity that produces IGP and AICAR from PRFAR using the ammonia provided by the HisH subunit. This is Imidazole glycerol phosphate synthase subunit HisF from Streptococcus gordonii (strain Challis / ATCC 35105 / BCRC 15272 / CH1 / DL1 / V288).